Consider the following 548-residue polypeptide: Zinc metalloproteinase dpy-31 (548 aa).

The N-terminal stretch at 1 to 24 is a signal peptide; the sequence is MSLLRSASLLLVVVTAALPPCTLG. Positions 25–150 are excised as a propeptide; sequence YSLHDGSRLD…KTGQRRVKRK (126 aa). Residues 150–349 form the Peptidase M12A domain; it reads KFIGSDLRRW…IRLMNKIYCS (200 aa). Asparagine 190 carries an N-linked (GlcNAc...) asparagine glycan. 5 cysteine pairs are disulfide-bonded: cysteine 193–cysteine 348, cysteine 216–cysteine 237, cysteine 352–cysteine 372, cysteine 374–cysteine 383, and cysteine 394–cysteine 422. Residue histidine 245 coordinates Zn(2+). Glutamate 246 is an active-site residue. Zn(2+) is bound by residues histidine 249 and histidine 255. One can recognise an EGF-like domain in the interval 344-384; it reads NKIYCSNVCSRKLPCQRGGYTDPRRCDRCRCPDGFTGQFCE. A CUB domain is found at 394–510; that stretch reads CGGRIQVNSG…RGFEARARAL (117 aa). Asparagine 461 carries an N-linked (GlcNAc...) asparagine glycan. A TSP type-1 domain is found at 513–547; the sequence is NGQWASWTPWTPCTASCGACGSRMRTRVCPHGACP. Cystine bridges form between cysteine 525/cysteine 546, cysteine 529/cysteine 546, and cysteine 541/cysteine 546.

Zn(2+) is required as a cofactor.

Its subcellular location is the secreted. Functionally, metalloprotease which cleaves the carboxyl terminus of procollagens to mature collagens. Probably involved in cuticular collagen maturation. The sequence is that of Zinc metalloproteinase dpy-31 from Haemonchus contortus (Barber pole worm).